The following is a 213-amino-acid chain: ATP synthase peripheral stalk subunit OSCP, mitochondrial (213 aa).

Residues 1–23 constitute a mitochondrion transit peptide; sequence MAAPAVSGVSQQVRYFGTSVVRP. The SIFI-degron motif lies at 5-23; sequence AVSGVSQQVRYFGTSVVRP. N6-acetyllysine is present on residues K54, K60, K70, and K73. N6-succinyllysine is present on K90. N6-acetyllysine; alternate is present on residues K158 and K162. An N6-succinyllysine; alternate mark is found at K158 and K162. N6-acetyllysine occurs at positions 172, 176, and 192. K199 is subject to N6-succinyllysine.

It belongs to the ATPase delta chain family. Component of the ATP synthase complex composed at least of ATP5F1A/subunit alpha, ATP5F1B/subunit beta, ATP5MC1/subunit c (homooctomer), MT-ATP6/subunit a, MT-ATP8/subunit 8, ATP5ME/subunit e, ATP5MF/subunit f, ATP5MG/subunit g, ATP5MK/subunit k, ATP5MJ/subunit j, ATP5F1C/subunit gamma, ATP5F1D/subunit delta, ATP5F1E/subunit epsilon, ATP5PF/subunit F6, ATP5PB/subunit b, ATP5PD/subunit d, ATP5PO/subunit OSCP. ATP synthase complex consists of a soluble F(1) head domain (subunits alpha(3) and beta(3)) - the catalytic core - and a membrane F(0) domain - the membrane proton channel (subunits c, a, 8, e, f, g, k and j). These two domains are linked by a central stalk (subunits gamma, delta, and epsilon) rotating inside the F1 region and a stationary peripheral stalk (subunits F6, b, d, and OSCP). Post-translationally, acetylation at Lys-162 decreases ATP production. Deacetylated by SIRT3. In response to mitochondrial stress, the precursor protein is ubiquitinated by the SIFI complex in the cytoplasm before mitochondrial import, leading to its degradation. Within the SIFI complex, UBR4 initiates ubiquitin chain that are further elongated or branched by KCMF1.

The protein resides in the mitochondrion. It localises to the mitochondrion inner membrane. Functionally, subunit OSCP, of the mitochondrial membrane ATP synthase complex (F(1)F(0) ATP synthase or Complex V) that produces ATP from ADP in the presence of a proton gradient across the membrane which is generated by electron transport complexes of the respiratory chain. ATP synthase complex consist of a soluble F(1) head domain - the catalytic core - and a membrane F(1) domain - the membrane proton channel. These two domains are linked by a central stalk rotating inside the F(1) region and a stationary peripheral stalk. During catalysis, ATP synthesis in the catalytic domain of F(1) is coupled via a rotary mechanism of the central stalk subunits to proton translocation. In vivo, can only synthesize ATP although its ATP hydrolase activity can be activated artificially in vitro. Part of the complex F(0) domain. Part of the complex F(0) domain and the peripheric stalk, which acts as a stator to hold the catalytic alpha(3)beta(3) subcomplex and subunit a/ATP6 static relative to the rotary elements. This chain is ATP synthase peripheral stalk subunit OSCP, mitochondrial, found in Callithrix jacchus (White-tufted-ear marmoset).